Consider the following 357-residue polypeptide: Transcription factor unc-86 (357 aa).

The POU-IV box signature appears at 35-44; it reads RAAQVALADI. Positions 155 to 232 constitute a POU-specific domain; it reads DMDTDPRQLE…ILHSWLEKAE (78 aa). The homeobox DNA-binding region spans 253–312; that stretch reads KKRKRTSIAAPEKRELEQFFKQQPRPSGERIASIADRLDLKKNVVRVWFCNQRQKQKRDF.

This sequence belongs to the POU transcription factor family. Class-4 subfamily. Interacts with mec-3; the heterooligomer binds to the promoters of mec-3, mec-4 and mec-7. Specific to neurons and neuroblasts. Expressed in CEM head neurons and in IL2, URA, URB, URX and URY neurons. Not expressed in olfactory sensory neurons but expressed in AIZ interneurons.

Its subcellular location is the nucleus. Functionally, transcription factor required for correct cell fate determination and differentiation in diverse neuronal cell lineages where it plays a role in specifying the fate of daughter cells during cell divisions. Involved in sensory neuron production and function. Binds both alone and with mec-3 to the mec-3 promoter to initiate and maintain mec-3 expression which is required for sensory neuron differentiation. In addition, binds both alone and with mec-3 to the promoters of mec-4 and mec-7 which act to regulate sensory neuron function. Involved in determining the identity of the serotonergic NSM neurons and the cholinergic IL2 sensory and URA motor neurons. Promotes expression of the cfi-1 transcription factor in the URA and IL2 neurons which in turn activates normal URA and IL2 gene expression. Required to determine the identity of BDU sensory neurons in concert with transcription factor unc-86, regulating expression of a number of genes, including transcription factors ceh-14 and ahr-1, neuropeptides flp-10, nlp-1 and nlp-15, and tyramine receptor-encoding ser-2. Regulates expression of a number of genes in NSM neurons including bas-1, cat-1, dop-3, mgl-3, nlp-13, scd-2 and ptps-1. In the IL2 neurons, required for expression of cho-1, gcy-19, klp-6, lag-2, unc-5 and unc-17. Promotes expression of pkd-2 in the male-specific CEM head neurons. Required for dauer-specific branching of IL2Q neurons and nictation behavior. Controls both the timing and direction of axon outgrowth in HSN neurons. Plays a role in serotonin production by regulating expression of the tryptophan hydrolase tph-1 which catalyzes serotonin synthesis, in the AIM, NSM, HSN and RIH neurons. Involved in regulation of lin-11 expression in the AIZ interneurons, the major interneurons of the olfactory pathway, and is required for odortaxis behavior. Involved in neurite pruning between AIM neurons during larval development by regulating the expression of transcription factor mbr-1. Required for correct localization of unc-40. The sequence is that of Transcription factor unc-86 (unc-86) from Caenorhabditis elegans.